Here is a 327-residue protein sequence, read N- to C-terminus: Ribosomal RNA small subunit methyltransferase H (327 aa).

S-adenosyl-L-methionine is bound by residues 36–38 (GGH), aspartate 55, leucine 89, aspartate 103, and glutamine 110. Residues 286 to 327 (GAEPASDTEIEQNARAGSVRLRAAERTAAEPGRAHNPTGGVR) form a disordered region.

Belongs to the methyltransferase superfamily. RsmH family.

The protein localises to the cytoplasm. It carries out the reaction cytidine(1402) in 16S rRNA + S-adenosyl-L-methionine = N(4)-methylcytidine(1402) in 16S rRNA + S-adenosyl-L-homocysteine + H(+). In terms of biological role, specifically methylates the N4 position of cytidine in position 1402 (C1402) of 16S rRNA. This Parafrankia sp. (strain EAN1pec) protein is Ribosomal RNA small subunit methyltransferase H.